The primary structure comprises 314 residues: Testisin (314 aa).

Positions 1–19 are cleaved as a signal peptide; that stretch reads MGARGALLLALLLARAGLR. Residues 20–41 constitute a propeptide that is removed on maturation; that stretch reads KPESQEAAPLSGPCGRRVITSR. 2 disulfides stabilise this stretch: cysteine 33–cysteine 157 and cysteine 67–cysteine 83. The Peptidase S1 domain maps to 42–286; sequence IVGGEDAELG…HFEWIQKLMA (245 aa). Catalysis depends on charge relay system residues histidine 82 and aspartate 137. Asparagine 167 and asparagine 200 each carry an N-linked (GlcNAc...) asparagine glycan. 3 disulfides stabilise this stretch: cysteine 171-cysteine 244, cysteine 204-cysteine 223, and cysteine 234-cysteine 262. Serine 238 acts as the Charge relay system in catalysis. N-linked (GlcNAc...) asparagine glycosylation is present at asparagine 273. Serine 288 carries the GPI-anchor amidated serine lipid modification. The propeptide at 289–314 is removed in mature form; the sequence is GMSQPDPSWPLLFFPLLWALPLLGPV.

It belongs to the peptidase S1 family. In terms of tissue distribution, expressed predominantly in premeiotic testicular germ cells, mostly late pachytene and diplotene spermatocytes.

It is found in the cell membrane. Could regulate proteolytic events associated with testicular germ cell maturation. This Homo sapiens (Human) protein is Testisin (PRSS21).